Reading from the N-terminus, the 140-residue chain is Protein E6 (140 aa).

2 zinc fingers span residues 26–62 (CNFC…CQGC) and 99–135 (CVTC…CSLC).

The protein belongs to the papillomaviridae E6 protein family. In terms of assembly, forms homodimers. Interacts with ubiquitin-protein ligase UBE3A/E6-AP; this interaction stimulates UBE3A ubiquitin activity. Interacts with host BAK1.

It localises to the host cytoplasm. The protein localises to the host nucleus. Functionally, plays a major role in the induction and maintenance of cellular transformation. E6 associates with host UBE3A/E6-AP ubiquitin-protein ligase and modulates its activity. Protects host keratinocytes from apoptosis by mediating the degradation of host BAK1. May also inhibit host immune response. The sequence is that of Protein E6 from Human papillomavirus type 1 (Human papillomavirus type 1a).